A 324-amino-acid chain; its full sequence is Glyoxylate/hydroxypyruvate reductase B (324 aa).

Residues Arg237 and Glu266 contribute to the active site. Catalysis depends on His285, which acts as the Proton donor.

This sequence belongs to the D-isomer specific 2-hydroxyacid dehydrogenase family. GhrB subfamily. Homodimer.

Its subcellular location is the cytoplasm. It carries out the reaction glycolate + NADP(+) = glyoxylate + NADPH + H(+). It catalyses the reaction (R)-glycerate + NAD(+) = 3-hydroxypyruvate + NADH + H(+). The catalysed reaction is (R)-glycerate + NADP(+) = 3-hydroxypyruvate + NADPH + H(+). Functionally, catalyzes the NADPH-dependent reduction of glyoxylate and hydroxypyruvate into glycolate and glycerate, respectively. The protein is Glyoxylate/hydroxypyruvate reductase B of Salmonella heidelberg (strain SL476).